Here is a 459-residue protein sequence, read N- to C-terminus: Putrescine aminotransferase (459 aa).

Pyridoxal 5'-phosphate-binding positions include 150–151 (GT) and Gln-274. Lys-300 bears the N6-(pyridoxal phosphate)lysine mark. Residue Thr-332 coordinates pyridoxal 5'-phosphate.

It belongs to the class-III pyridoxal-phosphate-dependent aminotransferase family. Putrescine aminotransferase subfamily. Pyridoxal 5'-phosphate serves as cofactor.

It catalyses the reaction an alkane-alpha,omega-diamine + 2-oxoglutarate = an omega-aminoaldehyde + L-glutamate. The catalysed reaction is putrescine + 2-oxoglutarate = 1-pyrroline + L-glutamate + H2O. It carries out the reaction cadaverine + 2-oxoglutarate = 5-aminopentanal + L-glutamate. It participates in amine and polyamine degradation; putrescine degradation; 4-aminobutanal from putrescine (transaminase route): step 1/1. Catalyzes the aminotransferase reaction from putrescine to 2-oxoglutarate, leading to glutamate and 4-aminobutanal, which spontaneously cyclizes to form 1-pyrroline. This is the first step in one of two pathways for putrescine degradation, where putrescine is converted into 4-aminobutanoate (gamma-aminobutyrate or GABA) via 4-aminobutanal. Also functions as a cadaverine transaminase in a a L-lysine degradation pathway to succinate that proceeds via cadaverine, glutarate and L-2-hydroxyglutarate. This chain is Putrescine aminotransferase, found in Salmonella choleraesuis (strain SC-B67).